The chain runs to 311 residues: HPr kinase/phosphorylase (311 aa).

Residues His-138 and Lys-159 contribute to the active site. An ATP-binding site is contributed by 153-160 (GDSGIGKS). A Mg(2+)-binding site is contributed by Ser-160. Residue Asp-177 is the Proton acceptor; for phosphorylation activity. Proton donor; for dephosphorylation activity of the active site. Residues 201 to 210 (LEIRGVGIID) are important for the catalytic mechanism of both phosphorylation and dephosphorylation. Mg(2+) is bound at residue Glu-202. Arg-243 is an active-site residue. Residues 264–269 (PVKTGR) form an important for the catalytic mechanism of dephosphorylation region.

This sequence belongs to the HPrK/P family. As to quaternary structure, homohexamer. Mg(2+) serves as cofactor.

It carries out the reaction [HPr protein]-L-serine + ATP = [HPr protein]-O-phospho-L-serine + ADP + H(+). The catalysed reaction is [HPr protein]-O-phospho-L-serine + phosphate + H(+) = [HPr protein]-L-serine + diphosphate. Its function is as follows. Catalyzes the ATP- as well as the pyrophosphate-dependent phosphorylation of a specific serine residue in HPr, a phosphocarrier protein of the phosphoenolpyruvate-dependent sugar phosphotransferase system (PTS). HprK/P also catalyzes the pyrophosphate-producing, inorganic phosphate-dependent dephosphorylation (phosphorolysis) of seryl-phosphorylated HPr (P-Ser-HPr). The two antagonistic activities of HprK/P are regulated by several intracellular metabolites, which change their concentration in response to the absence or presence of rapidly metabolisable carbon sources (glucose, fructose, etc.) in the growth medium. Therefore, by controlling the phosphorylation state of HPr, HPrK/P is a sensor enzyme that plays a major role in the regulation of carbon metabolism and sugar transport: it mediates carbon catabolite repression (CCR), and regulates PTS-catalyzed carbohydrate uptake and inducer exclusion. This is HPr kinase/phosphorylase from Streptococcus agalactiae serotype Ia (strain ATCC 27591 / A909 / CDC SS700).